The sequence spans 276 residues: Formamidopyrimidine-DNA glycosylase (276 aa).

Catalysis depends on Pro-2, which acts as the Schiff-base intermediate with DNA. Glu-3 serves as the catalytic Proton donor. Catalysis depends on Lys-60, which acts as the Proton donor; for beta-elimination activity. Positions 113 and 152 each coordinate DNA. The segment at 241-275 (NVFRKTGHPCPRCGHLIEKLIVAQRSTHICPICQK) adopts an FPG-type zinc-finger fold. The active-site Proton donor; for delta-elimination activity is Arg-265.

Belongs to the FPG family. In terms of assembly, monomer. The cofactor is Zn(2+).

The enzyme catalyses Hydrolysis of DNA containing ring-opened 7-methylguanine residues, releasing 2,6-diamino-4-hydroxy-5-(N-methyl)formamidopyrimidine.. It catalyses the reaction 2'-deoxyribonucleotide-(2'-deoxyribose 5'-phosphate)-2'-deoxyribonucleotide-DNA = a 3'-end 2'-deoxyribonucleotide-(2,3-dehydro-2,3-deoxyribose 5'-phosphate)-DNA + a 5'-end 5'-phospho-2'-deoxyribonucleoside-DNA + H(+). In terms of biological role, involved in base excision repair of DNA damaged by oxidation or by mutagenic agents. Acts as a DNA glycosylase that recognizes and removes damaged bases. Has a preference for oxidized purines, such as 7,8-dihydro-8-oxoguanine (8-oxoG). Has AP (apurinic/apyrimidinic) lyase activity and introduces nicks in the DNA strand. Cleaves the DNA backbone by beta-delta elimination to generate a single-strand break at the site of the removed base with both 3'- and 5'-phosphates. The chain is Formamidopyrimidine-DNA glycosylase from Protochlamydia amoebophila (strain UWE25).